The sequence spans 346 residues: 4-hydroxy-2-oxohexanoate aldolase (346 aa).

A Pyruvate carboxyltransferase domain is found at 7 to 259 (VRITDTSLRD…KTGIDFFDIA (253 aa)). Residue 15–16 (RD) participates in substrate binding. Position 16 (Asp16) interacts with Mn(2+). The active-site Proton acceptor is the His19. 2 residues coordinate substrate: Ser169 and His198. Residues His198 and His200 each contribute to the Mn(2+) site. Residue Tyr289 coordinates substrate.

This sequence belongs to the 4-hydroxy-2-oxovalerate aldolase family. Homodimer. Forms a heterotetramer composed of two aldolase (HsaF) and two dehydrogenase (HsaG) subunits. It depends on Mn(2+) as a cofactor.

The enzyme catalyses (S)-4-hydroxy-2-oxohexanoate = propanal + pyruvate. The catalysed reaction is (S)-4-hydroxy-2-oxopentanoate = acetaldehyde + pyruvate. Involved in cholesterol degradation. Catalyzes the retro-aldol cleavage of 4-hydroxy-2-oxohexanoate (HOHA) to pyruvate and propanal. Can also catalyze the cleavage of 4-hydroxy-2-oxopentanoate (HOPA) to pyruvate and acetaldehyde. The aldehydes produced by this reaction are directly channeled to the dehydrogenase HsaG. The protein is 4-hydroxy-2-oxohexanoate aldolase of Mycobacterium bovis (strain ATCC BAA-935 / AF2122/97).